Consider the following 313-residue polypeptide: Methionyl-tRNA formyltransferase (313 aa).

109 to 112 (SLLP) contacts (6S)-5,6,7,8-tetrahydrofolate.

Belongs to the Fmt family.

The enzyme catalyses L-methionyl-tRNA(fMet) + (6R)-10-formyltetrahydrofolate = N-formyl-L-methionyl-tRNA(fMet) + (6S)-5,6,7,8-tetrahydrofolate + H(+). Its function is as follows. Attaches a formyl group to the free amino group of methionyl-tRNA(fMet). The formyl group appears to play a dual role in the initiator identity of N-formylmethionyl-tRNA by promoting its recognition by IF2 and preventing the misappropriation of this tRNA by the elongation apparatus. This is Methionyl-tRNA formyltransferase from Pelotomaculum thermopropionicum (strain DSM 13744 / JCM 10971 / SI).